A 401-amino-acid polypeptide reads, in one-letter code: uncharacterized protein (401 aa).

The next 7 membrane-spanning stretches (helical) occupy residues L44–I64, L69–L89, L99–F119, I130–P150, F201–L221, I246–A266, and L286–V306.

Its subcellular location is the cell membrane. This is an uncharacterized protein from Mycoplasma pneumoniae (strain ATCC 29342 / M129 / Subtype 1) (Mycoplasmoides pneumoniae).